The following is a 199-amino-acid chain: MFIAFEGIDGSGKSTQLVLLEKYLINRGKKVIKVREPGGTILGEKIRDLLLNFNMNKRSELLLFLASRAQLVEEVIRPSIEKGYFVLADRFSDSSIAYQGGARNLGKDLVEKLNIFATNGIFPDIVFFIDIPVQMAVRRMKEKEKDRIEKEGEDFLEKVRTTYLHIAKSRKNFFVIDGTKDVDYVFSQIKRIIDTMLDH.

Residue 7–14 participates in ATP binding; sequence GIDGSGKS.

Belongs to the thymidylate kinase family.

It carries out the reaction dTMP + ATP = dTDP + ADP. Functionally, phosphorylation of dTMP to form dTDP in both de novo and salvage pathways of dTTP synthesis. This is Thymidylate kinase from Thermosipho melanesiensis (strain DSM 12029 / CIP 104789 / BI429).